Reading from the N-terminus, the 325-residue chain is HTH-type transcriptional regulator VqsM (325 aa).

The 98-residue stretch at 226 to 323 (QRIELFLDSI…GQSTTEFRNS (98 aa)) folds into the HTH araC/xylS-type domain. DNA-binding regions (H-T-H motif) lie at residues 243–264 (VTTA…ADEG) and 290–313 (VDRI…RRWT).

Transcriptional regulator involved in both the repression (at least 99 genes, such as mexR and algU) and in the activation (at least 203 genes, such as mvfR, rsaL, vqsR and rpoS) of regulatory or putative regulatory proteins which are implicated in quorum sensing, virulence and multidrug resistance. The protein is HTH-type transcriptional regulator VqsM (vqsM) of Pseudomonas aeruginosa (strain ATCC 15692 / DSM 22644 / CIP 104116 / JCM 14847 / LMG 12228 / 1C / PRS 101 / PAO1).